The primary structure comprises 82 residues: ATP synthase subunit c, chloroplastic (82 aa).

2 helical membrane passes run 3 to 23 (PLIA…AAIG) and 57 to 77 (FAFM…LLFA).

The protein belongs to the ATPase C chain family. As to quaternary structure, F-type ATPases have 2 components, F(1) - the catalytic core - and F(0) - the membrane proton channel. F(1) has five subunits: alpha(3), beta(3), gamma(1), delta(1), epsilon(1). F(0) has four main subunits: a(1), b(1), b'(1) and c(10-14). The alpha and beta chains form an alternating ring which encloses part of the gamma chain. F(1) is attached to F(0) by a central stalk formed by the gamma and epsilon chains, while a peripheral stalk is formed by the delta, b and b' chains.

It localises to the plastid. The protein resides in the chloroplast thylakoid membrane. Its function is as follows. F(1)F(0) ATP synthase produces ATP from ADP in the presence of a proton or sodium gradient. F-type ATPases consist of two structural domains, F(1) containing the extramembraneous catalytic core and F(0) containing the membrane proton channel, linked together by a central stalk and a peripheral stalk. During catalysis, ATP synthesis in the catalytic domain of F(1) is coupled via a rotary mechanism of the central stalk subunits to proton translocation. Functionally, key component of the F(0) channel; it plays a direct role in translocation across the membrane. A homomeric c-ring of between 10-14 subunits forms the central stalk rotor element with the F(1) delta and epsilon subunits. The sequence is that of ATP synthase subunit c, chloroplastic from Oltmannsiellopsis viridis (Marine flagellate).